A 101-amino-acid polypeptide reads, in one-letter code: Defensin-like protein 222 (101 aa).

The signal sequence occupies residues 1 to 21 (MRTIVLFSTLMILVLSCMSNA). 3 disulfides stabilise this stretch: cysteine 68–cysteine 85, cysteine 71–cysteine 90, and cysteine 75–cysteine 92.

This sequence belongs to the DEFL family.

It is found in the secreted. The polypeptide is Defensin-like protein 222 (Arabidopsis thaliana (Mouse-ear cress)).